The sequence spans 241 residues: Methylthioribulose-1-phosphate dehydratase (241 aa).

A compositionally biased stretch (polar residues) spans 1 to 17; it reads MAKQVENNNNDHLVQST. Positions 1–21 are disordered; it reads MAKQVENNNNDHLVQSTDPEH. Residue Cys100 participates in substrate binding. Zn(2+)-binding residues include His117 and His119. Glu146 acts as the Proton donor/acceptor in catalysis. Zn(2+) is bound at residue His202.

It belongs to the aldolase class II family. MtnB subfamily. Zn(2+) serves as cofactor.

The protein localises to the cytoplasm. The enzyme catalyses 5-(methylsulfanyl)-D-ribulose 1-phosphate = 5-methylsulfanyl-2,3-dioxopentyl phosphate + H2O. It participates in amino-acid biosynthesis; L-methionine biosynthesis via salvage pathway; L-methionine from S-methyl-5-thio-alpha-D-ribose 1-phosphate: step 2/6. Its function is as follows. Catalyzes the dehydration of methylthioribulose-1-phosphate (MTRu-1-P) into 2,3-diketo-5-methylthiopentyl-1-phosphate (DK-MTP-1-P). The chain is Methylthioribulose-1-phosphate dehydratase from Aspergillus flavus (strain ATCC 200026 / FGSC A1120 / IAM 13836 / NRRL 3357 / JCM 12722 / SRRC 167).